The primary structure comprises 318 residues: Protease HtpX homolog (318 aa).

The next 2 membrane-spanning stretches (helical) occupy residues 6–26 (TAMLLAFMTALFMFVGFLIGG) and 28–48 (GGMMIAFLIAAGMNFFSYWNS). Zn(2+) is bound at residue H130. The active site involves E131. H134 contacts Zn(2+). Transmembrane regions (helical) follow at residues 145-165 (ITATLAGAISMLGNFAFFFGG) and 173-193 (PLGFVGVLVAMIVAPLAAMLV). E202 lines the Zn(2+) pocket. A disordered region spans residues 284–318 (NVSTGPVRAVNPTRKSRSVPNTGRGGSQPPRGPWS).

It belongs to the peptidase M48B family. Requires Zn(2+) as cofactor.

The protein localises to the cell inner membrane. This Rhizobium etli (strain ATCC 51251 / DSM 11541 / JCM 21823 / NBRC 15573 / CFN 42) protein is Protease HtpX homolog.